Here is a 367-residue protein sequence, read N- to C-terminus: Porin Omp2a (367 aa).

Positions 1-22 are cleaved as a signal peptide; that stretch reads MNIKSLLLGSAAALVAASGAQA.

Belongs to the alphaproteobacteria porin family. In terms of assembly, monomer.

It is found in the cell outer membrane. Forms passive diffusion pores that allow small molecular weight hydrophilic materials across the outer membrane. The polypeptide is Porin Omp2a (omp2a) (Brucella suis).